The sequence spans 117 residues: Prefoldin subunit beta (117 aa).

Belongs to the prefoldin subunit beta family. Heterohexamer of two alpha and four beta subunits.

The protein localises to the cytoplasm. Functionally, molecular chaperone capable of stabilizing a range of proteins. Seems to fulfill an ATP-independent, HSP70-like function in archaeal de novo protein folding. The polypeptide is Prefoldin subunit beta (Methanococcoides burtonii (strain DSM 6242 / NBRC 107633 / OCM 468 / ACE-M)).